We begin with the raw amino-acid sequence, 853 residues long: uncharacterized protein (853 aa).

Over residues 1-11 the composition is skewed to basic residues; sequence MAPRKKAVTKK. 3 disordered regions span residues 1–448, 485–621, and 635–658; these read MAPR…SNNV, IAPT…NYFN, and ENYK…NEDE. Over residues 20–37 the composition is skewed to acidic residues; the sequence is IEEEIIEEPVDEIVESDG. The segment covering 42 to 55 has biased composition (basic residues); the sequence is NKKKGKRKSSKKSK. Residues 60 to 74 show a composition bias toward acidic residues; it reads ENVEEEEQDQEEEEE. Basic and acidic residues predominate over residues 75–87; that stretch reads GNKKQKEENDADK. A compositionally biased stretch (basic residues) spans 88–107; it reads KSRKHDEHRKKRDSKNRRSH. Residues 112-121 show a composition bias toward acidic residues; that stretch reads ENEEGEEDDE. Basic residues predominate over residues 124–139; it reads RKKRRRRKHREKRKKN. Composition is skewed to acidic residues over residues 143-166 and 179-197; these read EEEE…EEDV and DFDE…EEEQ. Basic residues predominate over residues 216–228; it reads DKSKKRKSKKKKR. Composition is skewed to acidic residues over residues 232-260 and 268-286; these read DDDD…EDVN and KEEE…DEEK. 3 stretches are compositionally biased toward basic and acidic residues: residues 287-361, 370-400, and 411-425; these read QSEN…RDHY, SRDH…RDHY, and RSRD…DEKS. Low complexity-rich tracts occupy residues 426 to 447, 510 to 613, and 636 to 652; these read SSSN…SSNN, NNDN…SNSS, and NYKN…NNNK.

This is an uncharacterized protein from Dictyostelium discoideum (Social amoeba).